A 227-amino-acid chain; its full sequence is Translation initiation factor 6 (227 aa).

The protein belongs to the eIF-6 family.

In terms of biological role, binds to the 50S ribosomal subunit and prevents its association with the 30S ribosomal subunit to form the 70S initiation complex. In Methanococcus aeolicus (strain ATCC BAA-1280 / DSM 17508 / OCM 812 / Nankai-3), this protein is Translation initiation factor 6.